Reading from the N-terminus, the 721-residue chain is Ribonucleoside-diphosphate reductase subunit alpha (721 aa).

Residues T159, 175–176 (SC), G204, 384–388 (NLCSE), and 589–593 (PTGSI) contribute to the substrate site. A disulfide bond links C176 and C413. N384 (proton acceptor) is an active-site residue. The active-site Cysteine radical intermediate is C386. Catalysis depends on E388, which acts as the Proton acceptor.

This sequence belongs to the ribonucleoside diphosphate reductase large chain family. Tetramer of two alpha and two beta subunits.

It catalyses the reaction a 2'-deoxyribonucleoside 5'-diphosphate + [thioredoxin]-disulfide + H2O = a ribonucleoside 5'-diphosphate + [thioredoxin]-dithiol. Its activity is regulated as follows. Under complex allosteric control mediated by deoxynucleoside triphosphates and ATP binding. The type of nucleotide bound at the specificity site determines substrate preference. It seems probable that ATP makes the enzyme reduce CDP and UDP, dGTP favors ADP reduction and dTTP favors GDP reduction. In terms of biological role, provides the precursors necessary for DNA synthesis. Catalyzes the biosynthesis of deoxyribonucleotides from the corresponding ribonucleotides. The sequence is that of Ribonucleoside-diphosphate reductase subunit alpha (nrdE) from Mycoplasma genitalium (strain ATCC 33530 / DSM 19775 / NCTC 10195 / G37) (Mycoplasmoides genitalium).